We begin with the raw amino-acid sequence, 174 residues long: N-terminal acetyltransferase B complex catalytic subunit NAA20 (174 aa).

One can recognise an N-acetyltransferase domain in the interval Thr2–Ser151.

It belongs to the acetyltransferase family. ARD1 subfamily.

The catalysed reaction is N-terminal L-methionyl-L-asparaginyl-[protein] + acetyl-CoA = N-terminal N(alpha)-acetyl-L-methionyl-L-asparaginyl-[protein] + CoA + H(+). The enzyme catalyses N-terminal L-methionyl-L-glutaminyl-[protein] + acetyl-CoA = N-terminal N(alpha)-acetyl-L-methionyl-L-glutaminyl-[protein] + CoA + H(+). It carries out the reaction N-terminal L-methionyl-L-aspartyl-[protein] + acetyl-CoA = N-terminal N(alpha)-acetyl-L-methionyl-L-aspartyl-[protein] + CoA + H(+). It catalyses the reaction N-terminal L-methionyl-L-glutamyl-[protein] + acetyl-CoA = N-terminal N(alpha)-acetyl-L-methionyl-L-glutamyl-[protein] + CoA + H(+). In terms of biological role, catalytic subunit of the NatB N-alpha-acetyltransferase complex. Involved in plant immunity through the regulation of SNC1 stability. The chain is N-terminal acetyltransferase B complex catalytic subunit NAA20 from Arabidopsis thaliana (Mouse-ear cress).